Here is a 128-residue protein sequence, read N- to C-terminus: Sulfurtransferase TusD (128 aa).

The active-site Cysteine persulfide intermediate is C78.

It belongs to the DsrE/TusD family. As to quaternary structure, heterohexamer, formed by a dimer of trimers. The hexameric TusBCD complex contains 2 copies each of TusB, TusC and TusD. The TusBCD complex interacts with TusE.

The protein localises to the cytoplasm. In terms of biological role, part of a sulfur-relay system required for 2-thiolation of 5-methylaminomethyl-2-thiouridine (mnm(5)s(2)U) at tRNA wobble positions. Accepts sulfur from TusA and transfers it in turn to TusE. The chain is Sulfurtransferase TusD from Escherichia fergusonii (strain ATCC 35469 / DSM 13698 / CCUG 18766 / IAM 14443 / JCM 21226 / LMG 7866 / NBRC 102419 / NCTC 12128 / CDC 0568-73).